A 157-amino-acid polypeptide reads, in one-letter code: Lipoprotein signal peptidase (157 aa).

4 consecutive transmembrane segments (helical) span residues 10 to 30 (LVFM…KYAI), 38 to 58 (SLMV…LLSF), 59 to 79 (LEGG…IFLI), and 84 to 104 (LFKT…SNVL). Catalysis depends on residues Asp-114 and Asp-131. Residues 122-142 (FDFAIFNFADVMIDVGVGVLL) form a helical membrane-spanning segment.

This sequence belongs to the peptidase A8 family.

The protein localises to the cell inner membrane. It carries out the reaction Release of signal peptides from bacterial membrane prolipoproteins. Hydrolyzes -Xaa-Yaa-Zaa-|-(S,diacylglyceryl)Cys-, in which Xaa is hydrophobic (preferably Leu), and Yaa (Ala or Ser) and Zaa (Gly or Ala) have small, neutral side chains.. It participates in protein modification; lipoprotein biosynthesis (signal peptide cleavage). Its function is as follows. This protein specifically catalyzes the removal of signal peptides from prolipoproteins. This chain is Lipoprotein signal peptidase, found in Helicobacter pylori (strain HPAG1).